The primary structure comprises 476 residues: Cysteine--tRNA ligase (476 aa).

Cys28 provides a ligand contact to Zn(2+). Positions 30-40 match the 'HIGH' region motif; that stretch reads PTVYDNTHLGH. Zn(2+) contacts are provided by Cys208, His233, and Glu237. The 'KMSKS' region motif lies at 265-269; the sequence is KMSKS. An ATP-binding site is contributed by Lys268.

The protein belongs to the class-I aminoacyl-tRNA synthetase family. Requires Zn(2+) as cofactor.

It is found in the cytoplasm. It catalyses the reaction tRNA(Cys) + L-cysteine + ATP = L-cysteinyl-tRNA(Cys) + AMP + diphosphate. The polypeptide is Cysteine--tRNA ligase (Methanococcus maripaludis (strain DSM 14266 / JCM 13030 / NBRC 101832 / S2 / LL)).